The sequence spans 490 residues: Transcription factor MYB101 (490 aa).

The disordered stretch occupies residues 1–21 (MDGGGETTATATMEGRGLKKG). 2 consecutive HTH myb-type domains span residues 15 to 67 (GRGL…ANHL) and 68 to 122 (RPNL…KRRQ). DNA-binding regions (H-T-H motif) lie at residues 43 to 67 (WNAVQKNSGLLRCGKSCRLRWANHL) and 95 to 118 (WARMASQLPGRTDNEIKNYWNTRM). The tract at residues 168 to 206 (YTNSSNTSSSSSSFSSSSSQPSKRLRPDPLVSTNPGLNP) is disordered. Low complexity predominate over residues 169–186 (TNSSNTSSSSSSFSSSSS).

As to expression, present mostly in flowers, siliques and floral shoot tips. Expression is restricted to the subapical pith cells of both vegetative and flowering plants and to the hypocotyl hook. Expressed in pollen grains and pollen tube. Mostly expressed in mature pollen grains, and, to a lower extent, in inflorescences and siliques.

The protein resides in the nucleus. Its function is as follows. Transcription activator. Binds to 5'-CAACTGTC-3' and/or 5'-TAACAAA-3' motif in target gene promoter (e.g. alpha-amylase) to promote their expression. Positive regulator of abscisic acid (ABA) responses leading to growth arrest during seed germination. Promotes the expression of aleurone-related genes (e.g. CP1, CP, GASA1, BXL1 and BXL2) in seeds. Together with MYB33 and MYB65, promotes the programmed cell death (PCD) leading to vacuolation of protein storage vacuoles (PSVs) in the aleurone layers during seed germination. Maybe involved in the regulation of leaves lamina morphogenesis. Involved in pollen grain development. Together with MYB97 and MYB120, functions as a male factor that controls pollen tube-synergid interaction in fertilization. Required for pollen tube growth arrest and sperm cell release in the female gametophyte, probably via the regulation of pollen tube-specific gene expression. The protein is Transcription factor MYB101 of Arabidopsis thaliana (Mouse-ear cress).